We begin with the raw amino-acid sequence, 225 residues long: MIITVINGSPRKNGATSKVLTYLYKDIERLIPDVKINYFDLSEVNPSYCIGCLNCYKMGKCINQNDKVEYIHDIITKSDGVIFGSPTYGSSVTGLFKVFTDRAHMMLERLLYRKPCIAVTTYENARGSKAISFIKSMVLDSGGYVCGSLSIKTGFNQNPITEKVESKIQKVSKKFIYCIEEKKNPPVLSQIYNFIAINAVLKPMAFKDIEQYKGIIDRWEEQGII.

Residues Cys49, Cys52, Cys55, and Cys61 each coordinate [4Fe-4S] cluster.

The protein belongs to the SsuE family. Isf subfamily. In terms of assembly, homodimer. Requires FMN as cofactor. [4Fe-4S] cluster is required as a cofactor.

In terms of biological role, redox-active protein probably involved in electron transport. This is Iron-sulfur flavoprotein CD630_04720 from Clostridioides difficile (strain 630) (Peptoclostridium difficile).